The chain runs to 512 residues: GMP synthase [glutamine-hydrolyzing] (512 aa).

One can recognise a Glutamine amidotransferase type-1 domain in the interval 7-197; the sequence is TIIVLDFGSQ…VFGVCGCSEG (191 aa). Cys84 (nucleophile) is an active-site residue. Catalysis depends on residues His171 and Glu173. Residues 198 to 387 form the GMPS ATP-PPase domain; that stretch reads WNMENFIEVE…LGIPDEIVWR (190 aa). 225–231 lines the ATP pocket; that stretch reads SGGVDSS.

Homodimer.

The enzyme catalyses XMP + L-glutamine + ATP + H2O = GMP + L-glutamate + AMP + diphosphate + 2 H(+). Its pathway is purine metabolism; GMP biosynthesis; GMP from XMP (L-Gln route): step 1/1. In terms of biological role, catalyzes the synthesis of GMP from XMP. In Bacillus cereus (strain ATCC 10987 / NRS 248), this protein is GMP synthase [glutamine-hydrolyzing].